Consider the following 56-residue polypeptide: MFKQLILLALAAVFLLINISSAEPAAEPNANAEPLAEASAEPRIKIGLFDQLSKLG.

The signal sequence occupies residues 1–22 (MFKQLILLALAAVFLLINISSA). Residues 23–42 (EPAAEPNANAEPLAEASAEP) constitute a propeptide that is removed on maturation. Leucine 55 carries the leucine amide modification.

In terms of tissue distribution, expressed by the venom gland.

It is found in the secreted. Its function is as follows. Inhibits sodium channels (Nav) inactivation. Shows two types of inhibitory activities on channels. Inhibition of hNav1.6/SCN8A shows a large increase in the steady-state current component without any increase in the slow component, whereas inhibition of hNav1.1/SCN1A, hNav1.2/SCN2A, hNav1.3/SCN3A and hNav1.7/SCN9A shows a large increase in the slow component with only a small steady-state component. Is 5-fold less potent than beta-PMTX for inducing repetitive action potentials in lobster neuromuscular junctions. This Anoplius samariensis (Solitary wasp) protein is Alpha-pompilidotoxin.